Here is a 178-residue protein sequence, read N- to C-terminus: Beta-lactoglobulin-1A/1C (178 aa).

Residues 1 to 18 form the signal peptide; that stretch reads MRCLLLTLGLALLCGVQA. 2 cysteine pairs are disulfide-bonded: Cys84/Cys176 and Cys124/Cys137.

The protein belongs to the calycin superfamily. Lipocalin family. As to quaternary structure, under physiological conditions beta-lactoglobulin exists as an equilibrium mixture of monomeric and dimeric forms.

Its subcellular location is the secreted. Functionally, lactoglobulin is the primary component of whey, it binds retinol and is probably involved in the transport of that molecule. The protein is Beta-lactoglobulin-1A/1C of Sus scrofa (Pig).